Here is a 208-residue protein sequence, read N- to C-terminus: Small ribosomal subunit protein uS4 (208 aa).

Residues 98 to 159 form the S4 RNA-binding domain; the sequence is LRLDNVAYRL…AARTHIRIAA (62 aa).

The protein belongs to the universal ribosomal protein uS4 family. As to quaternary structure, part of the 30S ribosomal subunit. Contacts protein S5. The interaction surface between S4 and S5 is involved in control of translational fidelity.

In terms of biological role, one of the primary rRNA binding proteins, it binds directly to 16S rRNA where it nucleates assembly of the body of the 30S subunit. Functionally, with S5 and S12 plays an important role in translational accuracy. The polypeptide is Small ribosomal subunit protein uS4 (Acidithiobacillus ferrooxidans (strain ATCC 23270 / DSM 14882 / CIP 104768 / NCIMB 8455) (Ferrobacillus ferrooxidans (strain ATCC 23270))).